Consider the following 202-residue polypeptide: Holliday junction branch migration complex subunit RuvA (202 aa).

The segment at 1–64 (MIGRLRGSLA…EDAHLLYGFY (64 aa)) is domain I. A domain II region spans residues 65–143 (EKRERELFRE…AWEALPGTFT (79 aa)). The flexible linker stretch occupies residues 144–153 (LVSNGPNQAE). Positions 154 to 202 (PVASAESDAVSALISLGYKPQEASKAVSAIKEKDLSSADLIRRALKGMG) are domain III.

This sequence belongs to the RuvA family. Homotetramer. Forms an RuvA(8)-RuvB(12)-Holliday junction (HJ) complex. HJ DNA is sandwiched between 2 RuvA tetramers; dsDNA enters through RuvA and exits via RuvB. An RuvB hexamer assembles on each DNA strand where it exits the tetramer. Each RuvB hexamer is contacted by two RuvA subunits (via domain III) on 2 adjacent RuvB subunits; this complex drives branch migration. In the full resolvosome a probable DNA-RuvA(4)-RuvB(12)-RuvC(2) complex forms which resolves the HJ.

Its subcellular location is the cytoplasm. Its function is as follows. The RuvA-RuvB-RuvC complex processes Holliday junction (HJ) DNA during genetic recombination and DNA repair, while the RuvA-RuvB complex plays an important role in the rescue of blocked DNA replication forks via replication fork reversal (RFR). RuvA specifically binds to HJ cruciform DNA, conferring on it an open structure. The RuvB hexamer acts as an ATP-dependent pump, pulling dsDNA into and through the RuvAB complex. HJ branch migration allows RuvC to scan DNA until it finds its consensus sequence, where it cleaves and resolves the cruciform DNA. The protein is Holliday junction branch migration complex subunit RuvA of Pseudomonas syringae pv. syringae (strain B728a).